Consider the following 446-residue polypeptide: Probable glycine dehydrogenase (decarboxylating) subunit 1 (446 aa).

It belongs to the GcvP family. N-terminal subunit subfamily. As to quaternary structure, the glycine cleavage system is composed of four proteins: P, T, L and H. In this organism, the P 'protein' is a heterodimer of two subunits.

The catalysed reaction is N(6)-[(R)-lipoyl]-L-lysyl-[glycine-cleavage complex H protein] + glycine + H(+) = N(6)-[(R)-S(8)-aminomethyldihydrolipoyl]-L-lysyl-[glycine-cleavage complex H protein] + CO2. The glycine cleavage system catalyzes the degradation of glycine. The P protein binds the alpha-amino group of glycine through its pyridoxal phosphate cofactor; CO(2) is released and the remaining methylamine moiety is then transferred to the lipoamide cofactor of the H protein. The protein is Probable glycine dehydrogenase (decarboxylating) subunit 1 of Desulfitobacterium hafniense (strain DSM 10664 / DCB-2).